A 236-amino-acid polypeptide reads, in one-letter code: Orotidine 5'-phosphate decarboxylase (236 aa).

Substrate-binding positions include Asp-13, Lys-35, 62-71 (DLKFYDIPQT), Thr-123, Arg-184, Gln-193, Gly-213, and Arg-214. Lys-64 acts as the Proton donor in catalysis.

Belongs to the OMP decarboxylase family. Type 1 subfamily. In terms of assembly, homodimer.

The catalysed reaction is orotidine 5'-phosphate + H(+) = UMP + CO2. Its pathway is pyrimidine metabolism; UMP biosynthesis via de novo pathway; UMP from orotate: step 2/2. Catalyzes the decarboxylation of orotidine 5'-monophosphate (OMP) to uridine 5'-monophosphate (UMP). This Coxiella burnetii (strain CbuK_Q154) (Coxiella burnetii (strain Q154)) protein is Orotidine 5'-phosphate decarboxylase.